The following is an 88-amino-acid chain: Small ribosomal subunit protein bS20 (88 aa).

Over residues 1–21 the composition is skewed to basic residues; that stretch reads MANSKSAKKRALQSEKRRQHN. The interval 1 to 27 is disordered; the sequence is MANSKSAKKRALQSEKRRQHNASRSSM.

This sequence belongs to the bacterial ribosomal protein bS20 family.

In terms of biological role, binds directly to 16S ribosomal RNA. This Shewanella piezotolerans (strain WP3 / JCM 13877) protein is Small ribosomal subunit protein bS20.